Here is a 214-residue protein sequence, read N- to C-terminus: Pyridoxine/pyridoxamine 5'-phosphate oxidase (214 aa).

Substrate is bound by residues 8 to 11 (RKSY) and Lys67. FMN-binding positions include 62-67 (RVVLLK), 77-78 (YT), Lys84, and Gln106. Tyr124, Arg128, and Ser132 together coordinate substrate. FMN contacts are provided by residues 141-142 (QS) and Trp186. A substrate-binding site is contributed by 192 to 194 (RLH). FMN is bound at residue Arg196.

The protein belongs to the pyridoxamine 5'-phosphate oxidase family. Homodimer. The cofactor is FMN.

The catalysed reaction is pyridoxamine 5'-phosphate + O2 + H2O = pyridoxal 5'-phosphate + H2O2 + NH4(+). The enzyme catalyses pyridoxine 5'-phosphate + O2 = pyridoxal 5'-phosphate + H2O2. It functions in the pathway cofactor metabolism; pyridoxal 5'-phosphate salvage; pyridoxal 5'-phosphate from pyridoxamine 5'-phosphate: step 1/1. It participates in cofactor metabolism; pyridoxal 5'-phosphate salvage; pyridoxal 5'-phosphate from pyridoxine 5'-phosphate: step 1/1. Functionally, catalyzes the oxidation of either pyridoxine 5'-phosphate (PNP) or pyridoxamine 5'-phosphate (PMP) into pyridoxal 5'-phosphate (PLP). This is Pyridoxine/pyridoxamine 5'-phosphate oxidase from Flavobacterium psychrophilum (strain ATCC 49511 / DSM 21280 / CIP 103535 / JIP02/86).